Consider the following 524-residue polypeptide: Bifunctional purine biosynthesis protein PurH (524 aa).

In terms of domain architecture, MGS-like spans 1 to 144 (MTRRALVSVS…KNSAHVGVVV (144 aa)).

Belongs to the PurH family.

It catalyses the reaction (6R)-10-formyltetrahydrofolate + 5-amino-1-(5-phospho-beta-D-ribosyl)imidazole-4-carboxamide = 5-formamido-1-(5-phospho-D-ribosyl)imidazole-4-carboxamide + (6S)-5,6,7,8-tetrahydrofolate. The enzyme catalyses IMP + H2O = 5-formamido-1-(5-phospho-D-ribosyl)imidazole-4-carboxamide. The protein operates within purine metabolism; IMP biosynthesis via de novo pathway; 5-formamido-1-(5-phospho-D-ribosyl)imidazole-4-carboxamide from 5-amino-1-(5-phospho-D-ribosyl)imidazole-4-carboxamide (10-formyl THF route): step 1/1. It participates in purine metabolism; IMP biosynthesis via de novo pathway; IMP from 5-formamido-1-(5-phospho-D-ribosyl)imidazole-4-carboxamide: step 1/1. The protein is Bifunctional purine biosynthesis protein PurH of Anaeromyxobacter dehalogenans (strain 2CP-1 / ATCC BAA-258).